Reading from the N-terminus, the 321-residue chain is Glycolipid transfer protein domain-containing protein 2 (321 aa).

It belongs to the GLTP family.

This is Glycolipid transfer protein domain-containing protein 2 (Gltpd2) from Mus musculus (Mouse).